The primary structure comprises 113 residues: U11-theraphotoxin-Hhn1a (113 aa).

Residues 1-21 (MNTVRVTFLLVFVLAVSLGQA) form the signal peptide. Positions 22–74 (DKDENRMEMQEKAEQGKSYLDFAENLLLQKLEELEAKLLEEDSEESRNSRQKR) are excised as a propeptide. 3 disulfide bridges follow: Cys75-Cys90, Cys82-Cys95, and Cys89-Cys110.

The protein belongs to the neurotoxin 14 (magi-1) family. 01 (HNTX-16) subfamily. As to expression, expressed by the venom gland.

It is found in the secreted. Its function is as follows. Probable ion channel inhibitor. This Cyriopagopus hainanus (Chinese bird spider) protein is U11-theraphotoxin-Hhn1a.